The following is an 813-amino-acid chain: Probable E3 ubiquitin-protein ligase hulA (813 aa).

A C2 domain is found at 1 to 109 (MGSNLPAQPN…QMGGDEMLTR (109 aa)). 2 disordered regions span residues 131–235 (NLST…GWER) and 251–351 (RTTT…YFVD). The span at 148–167 (VQSSTSSGLVPQVAPSSSHP) shows a compositional bias: polar residues. A compositionally biased stretch (low complexity) spans 188–215 (RVPSTTRPSSTAAPASAAGAAVSNSHGS). Residues 227–260 (GRLPAGWERREDNLGRTYYVDHNTRTTTWTRPSS) enclose the WW 1 domain. A compositionally biased stretch (polar residues) spans 251–264 (RTTTWTRPSSNYNE). Positions 265–292 (HAQRSQREANMQLERRAHQSRMLPEDRT) are enriched in basic and acidic residues. Residues 293–307 (GANSPNLPESSQQAH) are compositionally biased toward polar residues. The span at 322 to 331 (ATGATTAGTG) shows a compositional bias: low complexity. 2 consecutive WW domains span residues 331–364 (GELP…DPRR) and 391–424 (GPLP…DPRL). Residues 480–813 (SASDLKKRLM…VEETLGFGQE (334 aa)) form the HECT domain. The Glycyl thioester intermediate role is filled by cysteine 781.

This sequence belongs to the RSP5/NEDD4 family. In terms of assembly, interacts with creD.

It localises to the cytoplasm. The catalysed reaction is S-ubiquitinyl-[E2 ubiquitin-conjugating enzyme]-L-cysteine + [acceptor protein]-L-lysine = [E2 ubiquitin-conjugating enzyme]-L-cysteine + N(6)-ubiquitinyl-[acceptor protein]-L-lysine.. The protein operates within protein modification; protein ubiquitination. In terms of biological role, E3 ubiquitin-protein ligase which accepts ubiquitin from an E2 ubiquitin-conjugating enzyme in the form of a thioester and then directly transfers the ubiquitin to targeted substrates. Probably involved in the regulatory network controlling carbon source utilization. The protein is Probable E3 ubiquitin-protein ligase hulA (hulA) of Aspergillus fumigatus (strain CBS 144.89 / FGSC A1163 / CEA10) (Neosartorya fumigata).